Reading from the N-terminus, the 387-residue chain is S-adenosylmethionine synthase (387 aa).

An ATP-binding site is contributed by H19. D21 contacts Mg(2+). Residue E47 coordinates K(+). An L-methionine-binding site is contributed by Q103. Residues 103–113 (QSPDIAQGVEL) form a flexible loop region. ATP contacts are provided by residues 167-169 (DMK), 233-234 (RF), D242, 248-249 (RK), A265, and K269. L-methionine is bound at residue D242. L-methionine is bound at residue K273.

The protein belongs to the AdoMet synthase family. Homotetramer; dimer of dimers. It depends on Mg(2+) as a cofactor. K(+) is required as a cofactor.

It is found in the cytoplasm. It catalyses the reaction L-methionine + ATP + H2O = S-adenosyl-L-methionine + phosphate + diphosphate. It participates in amino-acid biosynthesis; S-adenosyl-L-methionine biosynthesis; S-adenosyl-L-methionine from L-methionine: step 1/1. Functionally, catalyzes the formation of S-adenosylmethionine (AdoMet) from methionine and ATP. The overall synthetic reaction is composed of two sequential steps, AdoMet formation and the subsequent tripolyphosphate hydrolysis which occurs prior to release of AdoMet from the enzyme. The chain is S-adenosylmethionine synthase from Mycoplasma capricolum subsp. capricolum (strain California kid / ATCC 27343 / NCTC 10154).